We begin with the raw amino-acid sequence, 60 residues long: Potassium channel toxin MeuTXKalpha3 (60 aa).

Positions 1–22 (MKNYCGIITLFLAIISATGVFC) are cleaved as a signal peptide. 3 disulfide bridges follow: C32–C50, C37–C55, and C41–C57. P59 carries the post-translational modification Proline amide.

This sequence belongs to the short scorpion toxin superfamily. Potassium channel inhibitor family. In terms of tissue distribution, expressed by the venom gland.

It is found in the secreted. May block voltage-gated potassium channels (Kv). The chain is Potassium channel toxin MeuTXKalpha3 from Mesobuthus eupeus (Lesser Asian scorpion).